The following is a 262-amino-acid chain: MEAIPLVRSSLSGTLLVVVKLSALLIQNRAHLYNFLLLKIFLFNHWLLGLTQEAQGFHPPSKIAGCPVGRVLWAGLTLLEVPVCLALRVPRLVWAGLLGCARALGLGPKWLGAWEQLGLSAATWTDLFLSCLHSLMLAALLLLLLVWRLYQKAQCCSLGRLPRKALLQNRVVRRSLALLKSLYWWVESTAALTSWHLAYLITWTTCLASHLLQAAFEHTAQLAQAQEAEPQKALGLSSETPPPGPPAPGARPVLPEPGTPGE.

Helical transmembrane passes span 6–26 (LVRS…ALLI), 30–50 (AHLY…LLGL), 67–87 (PVGR…CLAL), 92–112 (LVWA…KWLG), and 127–147 (LFLS…LLVW). A disordered region spans residues 226–262 (QEAEPQKALGLSSETPPPGPPAPGARPVLPEPGTPGE). Pro residues predominate over residues 240 to 262 (TPPPGPPAPGARPVLPEPGTPGE).

The protein localises to the membrane. This chain is Transmembrane protein 270, found in Bos taurus (Bovine).